The chain runs to 373 residues: P2Y purinoceptor 1 (373 aa).

At 1–51 (MTEVLWPAVPNGTDAAFLAGPGSSWGNSTVASTAAVSSSFKCALTKTGFQF) the chain is on the extracellular side. N-linked (GlcNAc...) asparagine glycosylation is found at Asn-11 and Asn-27. 2 disulfides stabilise this stretch: Cys-42–Cys-296 and Cys-124–Cys-202. An ADP-binding site is contributed by Lys-46. The helical transmembrane segment at 52 to 74 (YYLPAVYILVFIIGFLGNSVAIW) threads the bilayer. Residues 75–87 (MFVFHMKPWSGIS) lie on the Cytoplasmic side of the membrane. A helical membrane pass occupies residues 88-109 (VYMFNLALADFLYVLTLPALIF). The Extracellular portion of the chain corresponds to 110–125 (YYFNKTDWIFGDAMCK). A glycan (N-linked (GlcNAc...) asparagine) is linked at Asn-113. The chain crosses the membrane as a helical span at residues 126 to 147 (LQRFIFHVNLYGSILFLTCISA). Topologically, residues 148 to 166 (HRYSGVVYPLKSLGRLKKK) are cytoplasmic. A helical membrane pass occupies residues 167–188 (NAICISVLVWLIVVVAISPILF). Over 189-214 (YSGTGVRKNKTITCYDTTSDEYLRSY) the chain is Extracellular. An N-linked (GlcNAc...) asparagine glycan is attached at Asn-197. An ADP-binding site is contributed by 203–205 (YDT). The chain crosses the membrane as a helical span at residues 215–237 (FIYSMCTTVAMFCVPLVLILGCY). Residues 238 to 260 (GLIVRALIYKDLDNSPLRRKSIY) are Cytoplasmic-facing. The helical transmembrane segment at 261–284 (LVIIVLTVFAVSYIPFHVMKTMNL) threads the bilayer. ADP-binding positions include 283-287 (NLRAR), 303-306 (YATY), and Arg-310. Over 285-303 (RARLDFQTPAMCAFNDRVY) the chain is Extracellular. Residues 304-325 (ATYQVTRGLASLNSCVDPILYF) form a helical membrane-spanning segment. Over 326 to 373 (LAGDTFRRRLSRATRKASRRSEANLQSKSEDMTLNILPEFKQNGDTSL) the chain is Cytoplasmic.

Belongs to the G-protein coupled receptor 1 family.

It is found in the cell membrane. Its activity is regulated as follows. ATP functions as antagonist and inhibits ADP-induced mobilization of Ca(2+). The P2Y1 receptor-specific antagonists A3P5PS, A3P5P and A2P5P inhibit downstream signaling mediated by mobilization of Ca(2+) from intracellular stores, and platelet shape changes in response to extracellular ADP. In terms of biological role, receptor for extracellular adenine nucleotides such as ADP. In platelets, binding to ADP leads to mobilization of intracellular calcium ions via activation of phospholipase C, a change in platelet shape, and ultimately platelet aggregation. In Homo sapiens (Human), this protein is P2Y purinoceptor 1 (P2RY1).